Reading from the N-terminus, the 200-residue chain is UPF0637 protein LCK_01372 (200 aa).

The protein belongs to the UPF0637 family.

The protein is UPF0637 protein LCK_01372 of Leuconostoc citreum (strain KM20).